The chain runs to 343 residues: Adenosine kinase (343 aa).

Asp-296 is a catalytic residue.

Belongs to the carbohydrate kinase PfkB family. It depends on Mg(2+) as a cofactor.

The enzyme catalyses adenosine + ATP = AMP + ADP + H(+). It functions in the pathway purine metabolism; AMP biosynthesis via salvage pathway; AMP from adenosine: step 1/1. ATP dependent phosphorylation of adenosine and other related nucleoside analogs to monophosphate derivatives. Can also act on the cytokinin isopentenyladenosine to produce isopentenyladenosine monophosphate. The polypeptide is Adenosine kinase (ADK) (Physcomitrium patens (Spreading-leaved earth moss)).